We begin with the raw amino-acid sequence, 296 residues long: Probable porphobilinogen deaminase (296 aa).

At Cys241 the chain carries S-(dipyrrolylmethanemethyl)cysteine.

Belongs to the HMBS family. Requires dipyrromethane as cofactor.

The catalysed reaction is 4 porphobilinogen + H2O = hydroxymethylbilane + 4 NH4(+). Its pathway is porphyrin-containing compound metabolism; protoporphyrin-IX biosynthesis; coproporphyrinogen-III from 5-aminolevulinate: step 2/4. Functionally, tetrapolymerization of the monopyrrole PBG into the hydroxymethylbilane pre-uroporphyrinogen in several discrete steps. The polypeptide is Probable porphobilinogen deaminase (Pyrobaculum neutrophilum (strain DSM 2338 / JCM 9278 / NBRC 100436 / V24Sta) (Thermoproteus neutrophilus)).